A 254-amino-acid chain; its full sequence is MEWTDEGIVLGVRRHGESSAIVELLTRGHGRHLGLVRGGAGSKLRPLLQPGNSVSAVWRARLDEHLGYYVLEGTRMRAAMLLASSHAVYGVTHLASLARLLPERDPQPEIYERLERTLDDFDDVGEAAVHVIRFELTMLAELGFGLDLANCAATGVTSDLIYVSPKSGGAVSRAAGEPWRDKLLRLPPFLREGSAQRNDWSDQDLQDGFLLTGRFLLRNVLEPRGQGHSDARDGFINAVVRLRTRELAETAPPK.

The protein belongs to the RecO family.

Its function is as follows. Involved in DNA repair and RecF pathway recombination. The protein is DNA repair protein RecO of Rhodopseudomonas palustris (strain BisB18).